The primary structure comprises 107 residues: uncharacterized protein (107 aa).

Residues 62 to 79 (LLVVIVYYFSHVGSFSLA) traverse the membrane as a helical segment.

The protein localises to the nucleus membrane. This is an uncharacterized protein from Schizosaccharomyces pombe (strain 972 / ATCC 24843) (Fission yeast).